We begin with the raw amino-acid sequence, 249 residues long: MAPSRKFFVGGNWKMNGRKKNLGELITTLNAAKVPADTEVVCAPPTAYIDFARQKLDPKIAVAAQNCYKVTNGAFTGEISPGMIKDCGATWVVLGHSERRHVFGESDELIGQKVAHALSEGLGVIACIGEKLDEREAGITEKVVFEQTKVIADNVKDWSKVVLAYEPVWAIGTGKTATPQQAQEVHEKLRGWLKSNVSDAVAQSTRIIYGGSVTGATCKELASQPDVDGFLVGGASLKPEFVDIINAKQ.

Asn12 and Lys14 together coordinate substrate. Lys14 carries the post-translational modification N6-acetyllysine. The residue at position 16 (Asn16) is a Deamidated asparagine. Tyr68 carries the 3'-nitrotyrosine modification. The residue at position 72 (Asn72) is a Deamidated asparagine. At Ser80 the chain carries Phosphoserine. Residue His96 is the Electrophile of the active site. Ser106 bears the Phosphoserine mark. Lys142 participates in a covalent cross-link: Glycyl lysine isopeptide (Lys-Gly) (interchain with G-Cter in SUMO1). Lys149 carries the N6-succinyllysine modification. Lys156 carries the post-translational modification N6-acetyllysine; alternate. Residue Lys156 is modified to N6-succinyllysine; alternate. Ser159 is subject to Phosphoserine. Residue Glu166 is the Proton acceptor of the active site. At Thr173 the chain carries Phosphothreonine. At Lys194 the chain carries N6-acetyllysine; alternate. Lys194 is subject to N6-succinyllysine; alternate. N6-methyllysine; alternate is present on Lys194. A Phosphoserine modification is found at Ser198. 3'-nitrotyrosine is present on Tyr209. Position 212 is a phosphoserine (Ser212). Phosphothreonine is present on Thr214. Residue Ser223 is modified to Phosphoserine. Lys238 is modified (N6-acetyllysine).

It belongs to the triosephosphate isomerase family. Homodimer. In terms of processing, asn-16 and Asn-72 undergo deamidation which gives rise to four extra negative charges. These are expected to decrease subunit-subunit interactions and so expose the hydrophobic interface to the aqueous environment.

It is found in the cytoplasm. It catalyses the reaction D-glyceraldehyde 3-phosphate = dihydroxyacetone phosphate. The catalysed reaction is dihydroxyacetone phosphate = methylglyoxal + phosphate. The protein operates within carbohydrate degradation; glycolysis; D-glyceraldehyde 3-phosphate from glycerone phosphate: step 1/1. Its pathway is carbohydrate biosynthesis; gluconeogenesis. Its function is as follows. Triosephosphate isomerase is an extremely efficient metabolic enzyme that catalyzes the interconversion between dihydroxyacetone phosphate (DHAP) and D-glyceraldehyde-3-phosphate (G3P) in glycolysis and gluconeogenesis. Functionally, it is also responsible for the non-negligible production of methylglyoxal a reactive cytotoxic side-product that modifies and can alter proteins, DNA and lipids. This chain is Triosephosphate isomerase (TPI1), found in Oryctolagus cuniculus (Rabbit).